Reading from the N-terminus, the 214-residue chain is Fibroblast growth factor 8 (214 aa).

The first 22 residues, 1–22, serve as a signal peptide directing secretion; sequence MDPCSSLFSYVFMHLFVLCLQA. N31, N137, and N207 each carry an N-linked (GlcNAc...) asparagine glycan.

This sequence belongs to the heparin-binding growth factors family.

The protein localises to the secreted. In terms of biological role, plays an important role in the regulation of embryonic development, cell proliferation, cell differentiation and cell migration. Involved in initiation, outgrowth and patterning of the limbs. This is Fibroblast growth factor 8 (FGF8) from Gallus gallus (Chicken).